The following is a 65-amino-acid chain: Alpha-toxin Bot11 (65 aa).

The LCN-type CS-alpha/beta domain occupies 2 to 64; sequence KDGYIVDDRN…VRTVQAGRCR (63 aa). 4 cysteine pairs are disulfide-bonded: Cys12-Cys63, Cys16-Cys36, Cys22-Cys46, and Cys26-Cys48.

This sequence belongs to the long (4 C-C) scorpion toxin superfamily. Sodium channel inhibitor family. Alpha subfamily. In terms of tissue distribution, expressed by the venom gland.

The protein localises to the secreted. Functionally, alpha toxins bind voltage-independently at site-3 of sodium channels (Nav) and inhibit the inactivation of the activated channels, thereby blocking neuronal transmission. This Buthus occitanus tunetanus (Common European scorpion) protein is Alpha-toxin Bot11.